A 1279-amino-acid chain; its full sequence is Sterol regulatory element-binding protein cleavage-activating protein (1279 aa).

The Cytoplasmic portion of the chain corresponds to 1–18 (MTLTERLREKISQAFYNH). The helical transmembrane segment at 19 to 39 (GLLCASYPIPIILFTGLCILA) threads the bilayer. Residues 40 to 279 (CCYPLLKLPL…SLVHVHFKEE (240 aa)) lie on the Lumenal side of the membrane. Residues 46 to 284 (KLPLPGTGPV…HFKEEIGIAE (239 aa)) form a loop-1 region. Residues 60-81 (PVKDYSPPPSASDHKPGEPSEQ) form a disordered region. The N-linked (GlcNAc...) asparagine glycan is linked to asparagine 263. Residues 280–300 (IGIAELIPLVTTYIILFAYIY) traverse the membrane as a helical segment. The 159-residue stretch at 284–442 (ELIPLVTTYI…MPFFTTVLSI (159 aa)) folds into the SSD domain. At 301 to 312 (FSTRKIDMVKSK) the chain is on the cytoplasmic side. A helical transmembrane segment spans residues 313 to 333 (WGLALAAVVTVLSSLLMSVGL). Residues 334–344 (CTLFGLTPTLN) are Lumenal-facing. Residues 345–365 (GGEIFPYLVVVIGLENVLVLT) form a helical membrane-spanning segment. At 366–401 (KSVVSTPVDLEVKLRIAQGLSSESWSIMKNMATELG) the chain is on the cytoplasmic side. A helical transmembrane segment spans residues 402–422 (IILIGYFTLVPAIQEFCLFAV). Position 423 (valine 423) is a topological domain, lumenal. A helical transmembrane segment spans residues 424–444 (GLVSDFFLQMPFFTTVLSIDI). At 445 to 518 (RRMELADLNK…FLARTRLAQR (74 aa)) the chain is on the cytoplasmic side. The ER export signal motif lies at 447–452 (MELADL). Residues lysine 454 and lysine 466 each participate in a glycyl lysine isopeptide (Lys-Gly) (interchain with G-Cter in ubiquitin) cross-link. The chain crosses the membrane as a helical span at residues 519 to 539 (LIMAGTVVWIGILAYTDPAGL). The segment at 535 to 710 (DPAGLRTYLA…QAHRDVTLYK (176 aa)) is loop-7. Topologically, residues 540-707 (RTYLAAQVTE…GVAQAHRDVT (168 aa)) are lumenal. The segment at 588–617 (LENQTLPGEPPEPGGQAEGVHDSPAPEVTW) is disordered. N-linked (GlcNAc...) asparagine glycosylation is found at asparagine 590 and asparagine 641. Residues 668 to 696 (EGRHPQDSRSAWSPPQPAQGGLWDAGPKG) form a disordered region. A helical membrane pass occupies residues 708 to 728 (LYKVAALGLATGILLVLLLCL). Residues 729–1279 (YRVLCPRNYG…YVPSVLEKLD (551 aa)) lie on the Cytoplasmic side of the membrane. An interaction with SREBF2 region spans residues 730 to 1279 (RVLCPRNYGQ…YVPSVLEKLD (550 aa)). A WD 1 repeat occupies 770-810 (VLRGHLMDIECLASDGMLLVSCCLAGHVCVWDAQTGDCLTR). Phosphoserine occurs at positions 821, 837, 843, and 850. Disordered stretches follow at residues 834 to 868 (ERLSDGGKASPEEPGDSPPLRHRPRGTPLPSLFGD), 883 to 903 (HPRLPELDHPEPRHRSGCRRT), and 925 to 959 (VPMHTPAPRPPSPGPTPPQTPEDEGSFPPEKGSPS). The segment covering 885-896 (RLPELDHPEPRH) has biased composition (basic and acidic residues). Residues 929–944 (TPAPRPPSPGPTPPQT) are compositionally biased toward pro residues. Residue serine 936 is modified to Phosphoserine. 2 WD repeats span residues 952 to 1002 (PPEK…LRCS) and 1005 to 1042 (EVASGITALVFLDKRIVAARLNGSLDFFSLETHTALSP). Omega-N-methylarginine is present on arginine 1051. WD repeat units lie at residues 1077-1114 (AHQKPITALKAAAGRLVTGSQDHTLRVFRLEDSCCLFT), 1117-1155 (GHSGAITTVYIDQTMVLASGGQDGAICLWDVLTGSRVSH), 1158-1195 (AHRGDVTSLTCTTSCVISSGLDDLISIWDRSTGIKLYS), and 1197-1235 (QQDLGCGASLGVISDNLLVTGGQGCVSFWDLNYGDLLQT).

The protein belongs to the WD repeat SCAP family. As to quaternary structure, membrane region forms a homotetramer. Component of the SCAP-SREBP complex (composed of SCAP and SREBF1/SREBP1 or SREBF2/SREBP2); interacts with SREBF1/SREBP1 or SREBF2/SREBP2 through its C-terminal cytoplasmic domain. Forms a ternary complex with INSIG1 or INSIG2 through its transmembrane domains at high sterol concentrations. Interacts with PAQR3; the interaction anchors the SCAP-SREBP complex to the Golgi apparatus in low cholesterol conditions. Interacts with the SEC23-SEC24 complex in a SAR1-GTP-dependent manner through an ER export signal in its third cytoplasmic loop. Interacts with RNF139; the interaction inhibits the interaction of SCAP with SEC24B and hampering the ER to Golgi transport of the SCAP-SREBP complex. Interacts with SPRING1. Ubiquitinated at Lys-454 and Lys-466. RNF145 triggers ubiquitination of SCAP, likely inhibiting SCAP-SREBP complex transport to the Golgi apparatus and the subsequent processing/maturation of SREBF2/SREBP2. As to expression, widely expressed with higher levels in lung, kidney, gut, brain and adipose tissue. In terms of tissue distribution, expressed in liver and muscle. Isoform 3 expressed in testis. Expressed in testis.

It is found in the endoplasmic reticulum membrane. The protein localises to the golgi apparatus membrane. It localises to the cytoplasmic vesicle. The protein resides in the COPII-coated vesicle membrane. Its function is as follows. Escort protein required for cholesterol as well as lipid homeostasis. Regulates export of the SCAP-SREBP complex from the endoplasmic reticulum to the Golgi upon low cholesterol, thereby regulating the processing of sterol regulatory element-binding proteins (SREBPs) SREBF1/SREBP1 and SREBF2/SREBP2. At high sterol concentrations, formation of a ternary complex with INSIG (INSIG1 or INSIG2) leads to mask the ER export signal in SCAP, promoting retention of the complex in the endoplasmic reticulum. Low sterol concentrations trigger release of INSIG, a conformational change in the SSD domain of SCAP, unmasking of the ER export signal, promoting recruitment into COPII-coated vesicles and transport of the SCAP-SREBP to the Golgi: in the Golgi, SREBPs are then processed, releasing the transcription factor fragment of SREBPs from the membrane, its import into the nucleus and up-regulation of LDLR, INSIG1 and the mevalonate pathway. Binds cholesterol via its SSD domain. The polypeptide is Sterol regulatory element-binding protein cleavage-activating protein (Sus scrofa (Pig)).